The chain runs to 438 residues: DEAD-box ATP-dependent RNA helicase 58, chloroplastic (438 aa).

The N-terminal 44 residues, 1 to 44 (MAAFSGCASPLSTTLRSGLAPFTLRHRLRLRRLRASAATLREVC), are a transit peptide targeting the chloroplast. A Q motif motif is present at residues 41-69 (REVCAGRVPEHVLQRAEEVGYVVPTEVQE). A Helicase ATP-binding domain is found at 72-245 (LPVLLSGQDC…DCVQHKWTKT (174 aa)). 85–92 (AQTGSGKT) is a binding site for ATP. The short motif at 190-193 (DEVD) is the DEAD box element. The region spanning 274–436 (RLHVLLSLLE…ELPVESMFAF (163 aa)) is the Helicase C-terminal domain.

Belongs to the DEAD box helicase family.

It localises to the plastid. The protein resides in the chloroplast. The catalysed reaction is ATP + H2O = ADP + phosphate + H(+). In Oryza sativa subsp. japonica (Rice), this protein is DEAD-box ATP-dependent RNA helicase 58, chloroplastic.